We begin with the raw amino-acid sequence, 241 residues long: Prolactin-8A8 (241 aa).

Positions 1 to 30 (MELQFRQPHFSDALLLLLLSNLLLWEKASS) are cleaved as a signal peptide. 3 cysteine pairs are disulfide-bonded: Cys-34/Cys-41, Cys-101/Cys-217, and Cys-234/Cys-241. Asn-213 is a glycosylation site (N-linked (GlcNAc...) asparagine).

This sequence belongs to the somatotropin/prolactin family. As to expression, expressed specifically in the placenta. Predominantly expressed in spongiotrophoblast cells.

Its subcellular location is the secreted. The polypeptide is Prolactin-8A8 (Prl8a8) (Mus musculus (Mouse)).